A 184-amino-acid polypeptide reads, in one-letter code: Small ribosomal subunit protein uS7 (184 aa).

This sequence belongs to the universal ribosomal protein uS7 family. In terms of assembly, part of the 30S ribosomal subunit.

One of the primary rRNA binding proteins, it binds directly to 16S rRNA where it nucleates assembly of the head domain of the 30S subunit. Is located at the subunit interface close to the decoding center. The polypeptide is Small ribosomal subunit protein uS7 (Thermoplasma volcanium (strain ATCC 51530 / DSM 4299 / JCM 9571 / NBRC 15438 / GSS1)).